Here is a 215-residue protein sequence, read N- to C-terminus: 3-dehydroquinate dehydratase (215 aa).

3-dehydroquinate-binding positions include 27–29 and Arg-54; that span reads ELR. His-112 (proton donor/acceptor) is an active-site residue. Lys-139 (schiff-base intermediate with substrate) is an active-site residue. The 3-dehydroquinate site is built by Arg-176 and Gln-198.

The protein belongs to the type-I 3-dehydroquinase family. As to quaternary structure, homodimer.

The enzyme catalyses 3-dehydroquinate = 3-dehydroshikimate + H2O. Its pathway is metabolic intermediate biosynthesis; chorismate biosynthesis; chorismate from D-erythrose 4-phosphate and phosphoenolpyruvate: step 3/7. In terms of biological role, involved in the third step of the chorismate pathway, which leads to the biosynthesis of aromatic amino acids. Catalyzes the cis-dehydration of 3-dehydroquinate (DHQ) and introduces the first double bond of the aromatic ring to yield 3-dehydroshikimate. The sequence is that of 3-dehydroquinate dehydratase from Pyrococcus abyssi (strain GE5 / Orsay).